The chain runs to 254 residues: TLC domain-containing protein At5g14285 (254 aa).

A run of 6 helical transmembrane segments spans residues 12–32 (DLPI…FIVF), 45–65 (SCLI…RAVF), 82–101 (TVLD…YIVF), 124–144 (FLVF…EVTS), 172–192 (LSPP…PLFF), and 211–231 (WLWI…ILWI). Positions 38–248 (QIRPEASSCL…FSERKANKIR (211 aa)) constitute a TLC domain.

Its subcellular location is the membrane. The chain is TLC domain-containing protein At5g14285 from Arabidopsis thaliana (Mouse-ear cress).